The primary structure comprises 375 residues: Pectate lyase C (375 aa).

Residues 1-22 form the signal peptide; that stretch reads MKSLITPITAGLLLALSQPLLA. An intrachain disulfide couples Cys94 to Cys177. Ca(2+) contacts are provided by Asp151, Asp153, Glu188, and Asp192. Arg240 is a catalytic residue. Residues Cys351 and Cys374 are joined by a disulfide bond.

This sequence belongs to the polysaccharide lyase 1 family. PLADES subfamily. Requires Ca(2+) as cofactor.

The protein localises to the secreted. The enzyme catalyses Eliminative cleavage of (1-&gt;4)-alpha-D-galacturonan to give oligosaccharides with 4-deoxy-alpha-D-galact-4-enuronosyl groups at their non-reducing ends.. The protein operates within glycan metabolism; pectin degradation; 2-dehydro-3-deoxy-D-gluconate from pectin: step 2/5. Involved in maceration and soft-rotting of plant tissue. This chain is Pectate lyase C, found in Dickeya chrysanthemi (Pectobacterium chrysanthemi).